The chain runs to 355 residues: UDP-N-acetylglucosamine--N-acetylmuramyl-(pentapeptide) pyrophosphoryl-undecaprenol N-acetylglucosamine transferase (355 aa).

UDP-N-acetyl-alpha-D-glucosamine-binding positions include 15 to 17, asparagine 127, arginine 163, serine 191, isoleucine 244, 263 to 268, and glutamine 288; these read TGG and ALTVSE.

It belongs to the glycosyltransferase 28 family. MurG subfamily.

The protein localises to the cell inner membrane. It catalyses the reaction di-trans,octa-cis-undecaprenyl diphospho-N-acetyl-alpha-D-muramoyl-L-alanyl-D-glutamyl-meso-2,6-diaminopimeloyl-D-alanyl-D-alanine + UDP-N-acetyl-alpha-D-glucosamine = di-trans,octa-cis-undecaprenyl diphospho-[N-acetyl-alpha-D-glucosaminyl-(1-&gt;4)]-N-acetyl-alpha-D-muramoyl-L-alanyl-D-glutamyl-meso-2,6-diaminopimeloyl-D-alanyl-D-alanine + UDP + H(+). It functions in the pathway cell wall biogenesis; peptidoglycan biosynthesis. Functionally, cell wall formation. Catalyzes the transfer of a GlcNAc subunit on undecaprenyl-pyrophosphoryl-MurNAc-pentapeptide (lipid intermediate I) to form undecaprenyl-pyrophosphoryl-MurNAc-(pentapeptide)GlcNAc (lipid intermediate II). The sequence is that of UDP-N-acetylglucosamine--N-acetylmuramyl-(pentapeptide) pyrophosphoryl-undecaprenol N-acetylglucosamine transferase from Salmonella paratyphi A (strain ATCC 9150 / SARB42).